A 321-amino-acid polypeptide reads, in one-letter code: Beta-ketoacyl-[acyl-carrier-protein] synthase III (321 aa).

Catalysis depends on residues Cys-114 and His-248. Residues 249–253 are ACP-binding; that stretch reads QANIR. Residue Asn-278 is part of the active site.

It belongs to the thiolase-like superfamily. FabH family. Homodimer.

Its subcellular location is the cytoplasm. The catalysed reaction is malonyl-[ACP] + acetyl-CoA + H(+) = 3-oxobutanoyl-[ACP] + CO2 + CoA. It functions in the pathway lipid metabolism; fatty acid biosynthesis. Functionally, catalyzes the condensation reaction of fatty acid synthesis by the addition to an acyl acceptor of two carbons from malonyl-ACP. Catalyzes the first condensation reaction which initiates fatty acid synthesis and may therefore play a role in governing the total rate of fatty acid production. Possesses both acetoacetyl-ACP synthase and acetyl transacylase activities. Its substrate specificity determines the biosynthesis of branched-chain and/or straight-chain of fatty acids. The chain is Beta-ketoacyl-[acyl-carrier-protein] synthase III from Methylococcus capsulatus (strain ATCC 33009 / NCIMB 11132 / Bath).